The following is a 659-amino-acid chain: UvrABC system protein B (659 aa).

A Helicase ATP-binding domain is found at 27–414; that stretch reads EGLEQNKKSQ…AHGEIVKQII (388 aa). Residue 40–47 coordinates ATP; sequence GVTGSGKT. Positions 93 to 116 match the Beta-hairpin motif; the sequence is YFDYYRPEAYMPNTDTYIDKTTKS. In terms of domain architecture, Helicase C-terminal spans 432 to 594; sequence QVEDMFDEIQ…IIPKTIIKPI (163 aa). One can recognise a UVR domain in the interval 624-659; that stretch reads EALVKDLRNQMLDASKQLNFERAAELRDIILELEAN.

The protein belongs to the UvrB family. Forms a heterotetramer with UvrA during the search for lesions. Interacts with UvrC in an incision complex.

The protein resides in the cytoplasm. Functionally, the UvrABC repair system catalyzes the recognition and processing of DNA lesions. A damage recognition complex composed of 2 UvrA and 2 UvrB subunits scans DNA for abnormalities. Upon binding of the UvrA(2)B(2) complex to a putative damaged site, the DNA wraps around one UvrB monomer. DNA wrap is dependent on ATP binding by UvrB and probably causes local melting of the DNA helix, facilitating insertion of UvrB beta-hairpin between the DNA strands. Then UvrB probes one DNA strand for the presence of a lesion. If a lesion is found the UvrA subunits dissociate and the UvrB-DNA preincision complex is formed. This complex is subsequently bound by UvrC and the second UvrB is released. If no lesion is found, the DNA wraps around the other UvrB subunit that will check the other stand for damage. The protein is UvrABC system protein B of Mycoplasma mobile (strain ATCC 43663 / 163K / NCTC 11711) (Mesomycoplasma mobile).